The sequence spans 296 residues: Immediate early response gene 5-like protein (296 aa).

This sequence belongs to the IER family.

The sequence is that of Immediate early response gene 5-like protein (ier5l) from Xenopus tropicalis (Western clawed frog).